The following is a 217-amino-acid chain: MLNISIAIDGPAGAGKSTIAKIIGNKLNIMYINTGSMYRAVTLMALKNNIEPSDIESLKTLINSMDISFNGNNIIVNGKDLEEAIRMPIINNNVSKYAAVEEVRELLVSMQQNISQKYNVVMDGRDIGTVVLKDAPYKFFITASAEVRAKRRLKELKEKKINISFQDVLKEIKERDYIDSNRKVNPLKQSKDAILIDTSNFTIEEVVDKICSIIKRD.

An ATP-binding site is contributed by 10-18; that stretch reads GPAGAGKST.

The protein belongs to the cytidylate kinase family. Type 1 subfamily.

Its subcellular location is the cytoplasm. The catalysed reaction is CMP + ATP = CDP + ADP. It carries out the reaction dCMP + ATP = dCDP + ADP. This Clostridium botulinum (strain Loch Maree / Type A3) protein is Cytidylate kinase.